The primary structure comprises 275 residues: Large ribosomal subunit protein uL2 (275 aa).

A compositionally biased stretch (polar residues) spans 38-53 (NSKAGRNNNGRITTRH). Disordered regions lie at residues 38 to 59 (NSKAGRNNNGRITTRHQGGGHK) and 224 to 257 (AMNPIDHPHGGGEGRTAAGRDPVSPWGTPTKGFR).

Belongs to the universal ribosomal protein uL2 family. In terms of assembly, part of the 50S ribosomal subunit. Forms a bridge to the 30S subunit in the 70S ribosome.

In terms of biological role, one of the primary rRNA binding proteins. Required for association of the 30S and 50S subunits to form the 70S ribosome, for tRNA binding and peptide bond formation. It has been suggested to have peptidyltransferase activity; this is somewhat controversial. Makes several contacts with the 16S rRNA in the 70S ribosome. The chain is Large ribosomal subunit protein uL2 from Burkholderia thailandensis (strain ATCC 700388 / DSM 13276 / CCUG 48851 / CIP 106301 / E264).